The chain runs to 234 residues: RNA chaperone ProQ (234 aa).

Basic and acidic residues predominate over residues 104–130; it reads LEEAKARVQAQRDARKREAAENGEKRE. The tract at residues 104 to 186 is disordered; sequence LEEAKARVQA…QRSTPVTSLE (83 aa). Positions 131–142 are enriched in basic residues; sequence PRRPRPAGKKPT. Composition is skewed to basic and acidic residues over residues 143–156 and 163–176; these read ARRD…EVRK and TSER…ETTE. Polar residues predominate over residues 177-186; sequence QRSTPVTSLE.

This sequence belongs to the ProQ family.

It localises to the cytoplasm. Functionally, RNA chaperone with significant RNA binding, RNA strand exchange and RNA duplexing activities. May regulate ProP activity through an RNA-based, post-transcriptional mechanism. The protein is RNA chaperone ProQ of Edwardsiella ictaluri (strain 93-146).